The primary structure comprises 283 residues: Extracellular metalloprotease MGG_08041 (283 aa).

An N-terminal signal peptide occupies residues Met1–Ala22. The N-linked (GlcNAc...) asparagine glycan is linked to Asn55. His197 provides a ligand contact to Zn(2+). Glu198 is a catalytic residue. His201 serves as a coordination point for Zn(2+). A disulfide bridge connects residues Cys233 and Cys260.

Belongs to the peptidase M43B family.

The protein localises to the secreted. In terms of biological role, secreted metalloproteinase that allows assimilation of proteinaceous substrates. In Pyricularia oryzae (strain 70-15 / ATCC MYA-4617 / FGSC 8958) (Rice blast fungus), this protein is Extracellular metalloprotease MGG_08041.